A 124-amino-acid chain; its full sequence is UPF0231 protein SO_3983 (124 aa).

The protein belongs to the UPF0231 family.

The polypeptide is UPF0231 protein SO_3983 (Shewanella oneidensis (strain ATCC 700550 / JCM 31522 / CIP 106686 / LMG 19005 / NCIMB 14063 / MR-1)).